We begin with the raw amino-acid sequence, 345 residues long: Anthranilate phosphoribosyltransferase (345 aa).

5-phospho-alpha-D-ribose 1-diphosphate-binding positions include Gly-84, 87–88 (GD), Thr-92, 94–97 (NVTT), 112–120 (KHGNRSVSS), and Ser-124. Residue Gly-84 participates in anthranilate binding. Thr-96 provides a ligand contact to Mg(2+). Asn-115 provides a ligand contact to anthranilate. Arg-170 is a binding site for anthranilate. Positions 228 and 229 each coordinate Mg(2+).

The protein belongs to the anthranilate phosphoribosyltransferase family. Homodimer. Requires Mg(2+) as cofactor.

It carries out the reaction N-(5-phospho-beta-D-ribosyl)anthranilate + diphosphate = 5-phospho-alpha-D-ribose 1-diphosphate + anthranilate. Its pathway is amino-acid biosynthesis; L-tryptophan biosynthesis; L-tryptophan from chorismate: step 2/5. Catalyzes the transfer of the phosphoribosyl group of 5-phosphorylribose-1-pyrophosphate (PRPP) to anthranilate to yield N-(5'-phosphoribosyl)-anthranilate (PRA). This is Anthranilate phosphoribosyltransferase from Corynebacterium aurimucosum (strain ATCC 700975 / DSM 44827 / CIP 107346 / CN-1) (Corynebacterium nigricans).